A 72-amino-acid chain; its full sequence is Keratin-associated protein 19-5 (72 aa).

This sequence belongs to the KRTAP type 19 family. In terms of assembly, interacts with hair keratins.

In terms of biological role, in the hair cortex, hair keratin intermediate filaments are embedded in an interfilamentous matrix, consisting of hair keratin-associated proteins (KRTAP), which are essential for the formation of a rigid and resistant hair shaft through their extensive disulfide bond cross-linking with abundant cysteine residues of hair keratins. The matrix proteins include the high-sulfur and high-glycine-tyrosine keratins. In Homo sapiens (Human), this protein is Keratin-associated protein 19-5 (KRTAP19-5).